Reading from the N-terminus, the 111-residue chain is Large ribosomal subunit protein uL22 (111 aa).

Belongs to the universal ribosomal protein uL22 family. As to quaternary structure, part of the 50S ribosomal subunit.

This protein binds specifically to 23S rRNA; its binding is stimulated by other ribosomal proteins, e.g. L4, L17, and L20. It is important during the early stages of 50S assembly. It makes multiple contacts with different domains of the 23S rRNA in the assembled 50S subunit and ribosome. In terms of biological role, the globular domain of the protein is located near the polypeptide exit tunnel on the outside of the subunit, while an extended beta-hairpin is found that lines the wall of the exit tunnel in the center of the 70S ribosome. This is Large ribosomal subunit protein uL22 from Xylella fastidiosa (strain 9a5c).